A 228-amino-acid polypeptide reads, in one-letter code: Translation initiation factor 6 (228 aa).

Its function is as follows. Binds to the 50S ribosomal subunit and prevents its association with the 30S ribosomal subunit to form the 70S initiation complex. The chain is Translation initiation factor 6 from Methanocaldococcus jannaschii (strain ATCC 43067 / DSM 2661 / JAL-1 / JCM 10045 / NBRC 100440) (Methanococcus jannaschii).